A 154-amino-acid chain; its full sequence is uncharacterized protein (154 aa).

Its subcellular location is the mitochondrion. This is an uncharacterized protein from Arabidopsis thaliana (Mouse-ear cress).